The following is a 194-amino-acid chain: Leucyl/phenylalanyl-tRNA--protein transferase (194 aa).

The protein belongs to the L/F-transferase family.

The protein localises to the cytoplasm. The enzyme catalyses N-terminal L-lysyl-[protein] + L-leucyl-tRNA(Leu) = N-terminal L-leucyl-L-lysyl-[protein] + tRNA(Leu) + H(+). The catalysed reaction is N-terminal L-arginyl-[protein] + L-leucyl-tRNA(Leu) = N-terminal L-leucyl-L-arginyl-[protein] + tRNA(Leu) + H(+). It catalyses the reaction L-phenylalanyl-tRNA(Phe) + an N-terminal L-alpha-aminoacyl-[protein] = an N-terminal L-phenylalanyl-L-alpha-aminoacyl-[protein] + tRNA(Phe). In terms of biological role, functions in the N-end rule pathway of protein degradation where it conjugates Leu, Phe and, less efficiently, Met from aminoacyl-tRNAs to the N-termini of proteins containing an N-terminal arginine or lysine. The polypeptide is Leucyl/phenylalanyl-tRNA--protein transferase (Chlorobium luteolum (strain DSM 273 / BCRC 81028 / 2530) (Pelodictyon luteolum)).